The following is a 164-amino-acid chain: MFNIVLVEPEIPPNTGNVIRLAANTGCRLHLVEPLGFSMDDKHMRRAGLDYHEYAQVLRHASWQALLDSQRPPAGRLFAMTTHGAGSVYDMRFLPGDWLVFGAETRGLAPDVRESFPMAQRLRVPMQPGQRSLNLSNTVAVTVFEAWRQNGFAGSHHPAAADQG.

Residues methionine 80, glycine 102, valine 124, and serine 132 each coordinate S-adenosyl-L-methionine.

The protein belongs to the class IV-like SAM-binding methyltransferase superfamily. RNA methyltransferase TrmH family. TrmL subfamily. In terms of assembly, homodimer.

It is found in the cytoplasm. It catalyses the reaction cytidine(34) in tRNA + S-adenosyl-L-methionine = 2'-O-methylcytidine(34) in tRNA + S-adenosyl-L-homocysteine + H(+). The enzyme catalyses 5-carboxymethylaminomethyluridine(34) in tRNA(Leu) + S-adenosyl-L-methionine = 5-carboxymethylaminomethyl-2'-O-methyluridine(34) in tRNA(Leu) + S-adenosyl-L-homocysteine + H(+). In terms of biological role, methylates the ribose at the nucleotide 34 wobble position in the two leucyl isoacceptors tRNA(Leu)(CmAA) and tRNA(Leu)(cmnm5UmAA). Catalyzes the methyl transfer from S-adenosyl-L-methionine to the 2'-OH of the wobble nucleotide. This Polaromonas sp. (strain JS666 / ATCC BAA-500) protein is tRNA (cytidine(34)-2'-O)-methyltransferase.